The primary structure comprises 163 residues: Photosystem II extrinsic protein V (163 aa).

An N-terminal signal peptide occupies residues 1 to 26 (MFRRLIGVVVATALLTFQLIVGSATA). Residues Cys-63, Cys-66, His-67, and His-118 each contribute to the heme c site.

Belongs to the cytochrome c family. PsbV subfamily. PSII is composed of 1 copy each of membrane proteins PsbA, PsbB, PsbC, PsbD, PsbE, PsbF, PsbH, PsbI, PsbJ, PsbK, PsbL, PsbM, PsbT, PsbX, PsbY, PsbZ, Psb30/Ycf12, peripheral proteins PsbO, CyanoQ (PsbQ), PsbU, PsbV and a large number of cofactors. It forms dimeric complexes. The cofactor is heme c.

It localises to the cellular thylakoid membrane. Its function is as follows. One of the extrinsic, lumenal subunits of photosystem II (PSII). PSII is a light-driven water plastoquinone oxidoreductase, using light energy to abstract electrons from H(2)O, generating a proton gradient subsequently used for ATP formation. The extrinsic proteins stabilize the structure of photosystem II oxygen-evolving complex (OEC), the ion environment of oxygen evolution and protect the OEC against heat-induced inactivation. Low-potential cytochrome c that plays a role in the OEC of PSII. The sequence is that of Photosystem II extrinsic protein V from Nostoc sp. (strain PCC 7120 / SAG 25.82 / UTEX 2576).